We begin with the raw amino-acid sequence, 163 residues long: Nucleotide-binding protein Mmcs_0777 (163 aa).

The protein belongs to the YajQ family.

In terms of biological role, nucleotide-binding protein. This Mycobacterium sp. (strain MCS) protein is Nucleotide-binding protein Mmcs_0777.